Reading from the N-terminus, the 127-residue chain is Small ribosomal subunit protein uS11 (127 aa).

Belongs to the universal ribosomal protein uS11 family. As to quaternary structure, part of the 30S ribosomal subunit. Interacts with proteins S7 and S18. Binds to IF-3.

In terms of biological role, located on the platform of the 30S subunit, it bridges several disparate RNA helices of the 16S rRNA. Forms part of the Shine-Dalgarno cleft in the 70S ribosome. The polypeptide is Small ribosomal subunit protein uS11 (Pelodictyon phaeoclathratiforme (strain DSM 5477 / BU-1)).